The following is a 394-amino-acid chain: Probable purine permease 23 (394 aa).

Residues 1–20 (MEMTEASKHTTTHEESEHVQ) show a composition bias toward basic and acidic residues. The interval 1-24 (MEMTEASKHTTTHEESEHVQNPEP) is disordered. At Ser-29 the chain carries Phosphoserine. Transmembrane regions (helical) follow at residues 43–63 (ISVLICLFLVLLGDSLVILLL), 85–105 (WMQALIQNAAFPILIPLFFIF), 124–144 (LILLYFSLGVLVAAHSKLYAL), 152–172 (GFFMLISGSQLIFTLIFTAII), 180–200 (WIIISIVLILVSYAFGGPVFS), 211–231 (GIQAWLTFAASVAFALSLCLV), 254–274 (VLEMQICVSSVASVVCLVGLF), 301–321 (VGLALSWQVWAVGLIGLVLYV), 328–348 (IVHMCASPLMAFIVVLAFDFI), and 352–372 (FSWPRIGALIGSVLALGSYFY).

This sequence belongs to the purine permeases (TC 2.A.7.14) family.

The protein resides in the membrane. In Arabidopsis thaliana (Mouse-ear cress), this protein is Probable purine permease 23 (PUP23).